The following is a 535-amino-acid chain: GMP synthase [glutamine-hydrolyzing] (535 aa).

The Glutamine amidotransferase type-1 domain occupies 24 to 217 (KILIVDFGSQ…VRKVAGLKGD (194 aa)). The Nucleophile role is filled by Cys-101. Residues His-191 and Glu-193 contribute to the active site. The GMPS ATP-PPase domain maps to 218–410 (WTMRAFREEA…LGLPEVFVGR (193 aa)). 245-251 (SGGVDSA) is an ATP binding site.

In terms of assembly, homodimer.

It carries out the reaction XMP + L-glutamine + ATP + H2O = GMP + L-glutamate + AMP + diphosphate + 2 H(+). The protein operates within purine metabolism; GMP biosynthesis; GMP from XMP (L-Gln route): step 1/1. Catalyzes the synthesis of GMP from XMP. The sequence is that of GMP synthase [glutamine-hydrolyzing] from Rhodopseudomonas palustris (strain BisB18).